A 457-amino-acid chain; its full sequence is Cysteine--tRNA ligase (457 aa).

Cysteine 28 lines the Zn(2+) pocket. The 'HIGH' region motif lies at 30 to 40 (MTVYDLCHIGH). Cysteine 209, histidine 234, and glutamate 238 together coordinate Zn(2+). The 'KMSKS' region signature appears at 266 to 270 (KMSKS). Lysine 269 is a binding site for ATP.

The protein belongs to the class-I aminoacyl-tRNA synthetase family. Monomer. Zn(2+) is required as a cofactor.

It is found in the cytoplasm. The catalysed reaction is tRNA(Cys) + L-cysteine + ATP = L-cysteinyl-tRNA(Cys) + AMP + diphosphate. The protein is Cysteine--tRNA ligase of Chromobacterium violaceum (strain ATCC 12472 / DSM 30191 / JCM 1249 / CCUG 213 / NBRC 12614 / NCIMB 9131 / NCTC 9757 / MK).